Consider the following 54-residue polypeptide: H-bracotoxin-Cf4 (54 aa).

The first 21 residues, 1-21, serve as a signal peptide directing secretion; the sequence is MSKLFIFFLLVALLAFVSSEA. 3 disulfide bridges follow: Cys-24-Cys-39, Cys-31-Cys-43, and Cys-38-Cys-53.

As to expression, expressed by the venom duct.

The protein resides in the secreted. This endoparasitoid wasp peptide has a role in disruption of the cellular host immune response, since it reduces the capacity of D.saccharalis hemocytes to encapsulate foreign bodies. On the other hand, it shows no effect on the humoral immune response, since it has no effect on phenoloxidase activity. The chain is H-bracotoxin-Cf4 from Cotesia flavipes (Parasitic wasp).